The sequence spans 245 residues: Deoxyadenosine kinase (245 aa).

28-36 (GLIGAGKTT) serves as a coordination point for ATP. 3 residues coordinate substrate: Glu-52, Tyr-64, and Gln-75. The active-site Proton acceptor is Asp-99. Positions 100, 105, and 165 each coordinate substrate.

The protein belongs to the DCK/DGK family.

It carries out the reaction 2'-deoxyadenosine + ATP = dAMP + ADP + H(+). Functionally, specific kinase that phosphorylates deoxyadenosine but not any other deoxyribonucleoside, as part of the deoxyribonucleotide salvage pathway. The sequence is that of Deoxyadenosine kinase (dak) from Dictyostelium discoideum (Social amoeba).